A 226-amino-acid chain; its full sequence is Teichuronic acid biosynthesis protein TuaF (226 aa).

Transmembrane regions (helical) follow at residues N15 to S35 and V202 to F222.

The protein localises to the cell membrane. It participates in cell wall biogenesis; teichuronic acid biosynthesis. The sequence is that of Teichuronic acid biosynthesis protein TuaF (tuaF) from Bacillus subtilis (strain 168).